Here is a 447-residue protein sequence, read N- to C-terminus: Glucose-6-phosphate isomerase (447 aa).

E287 acts as the Proton donor in catalysis. Catalysis depends on residues H308 and K422.

Belongs to the GPI family.

The protein resides in the cytoplasm. The enzyme catalyses alpha-D-glucose 6-phosphate = beta-D-fructose 6-phosphate. Its pathway is carbohydrate biosynthesis; gluconeogenesis. It functions in the pathway carbohydrate degradation; glycolysis; D-glyceraldehyde 3-phosphate and glycerone phosphate from D-glucose: step 2/4. In terms of biological role, catalyzes the reversible isomerization of glucose-6-phosphate to fructose-6-phosphate. This chain is Glucose-6-phosphate isomerase, found in Heliobacterium modesticaldum (strain ATCC 51547 / Ice1).